Reading from the N-terminus, the 254-residue chain is Syntaxin-6 (254 aa).

Residues 1 to 233 (MSMEDPFFVV…VSHMTSDRRQ (233 aa)) lie on the Cytoplasmic side of the membrane. Positions 46 to 72 (TTNELRNNLRSIEWDLEDLDETISIVE) form a coiled coil. The disordered stretch occupies residues 103 to 138 (KDQMSNSSMQALAERKNRQALLGESSSQSWSSGPDK). A t-SNARE coiled-coil homology domain is found at 162-224 (QLIVEQQDEQ…DNVMKKLAKV (63 aa)). Residues 234 to 254 (WCAIIVLFVILLVVLVLFLVL) form a helical; Anchor for type IV membrane protein membrane-spanning segment.

This sequence belongs to the syntaxin family.

The protein localises to the golgi apparatus membrane. The protein resides in the golgi apparatus. Its subcellular location is the trans-Golgi network membrane. It is found in the recycling endosome membrane. Its function is as follows. SNARE promoting movement of transport vesicles to target membranes. Targets endosomes to the trans-Golgi network, and may therefore function in retrograde trafficking. Together with SNARE STX12, promotes movement of vesicles from endosomes to the cell membrane, and may therefore function in the endocytic recycling pathway. This is Syntaxin-6 (STX6) from Gallus gallus (Chicken).